The following is a 340-amino-acid chain: MLVLAIETSCDETAAALVDGGRRILSSVVSSQVAIHAEYGGVVPEIASRKHLEMISPVISQALAEAGVSFGDIQGVAVTRGPGLSGALLVGLSAAKAIACARGIPFVGVHHIEGHLFAPFLERPVEFPFLALVVSGGHTHLYLVEGFGRYRTLGRTLDDAAGEAFDKSAKIMGLPYPGGARIDAMAQEGSPGAIRLPRPLLADGGLNFSFSGLKTAMLNRITKHPVSIPGAEANDLCASFQQAVCDVLVAKTAAALERTGVTRLVVAGGVACNSGLRRSMQALASGLSIDLRIPAPALCGDNAAMLAVPGNHYLEQGHASELSMDVTATWDMDRVGEGRS.

Histidine 111 and histidine 115 together coordinate Fe cation. Substrate contacts are provided by residues 133–137 (VVSGG), aspartate 166, glycine 179, aspartate 183, and asparagine 273. Aspartate 301 contributes to the Fe cation binding site.

This sequence belongs to the KAE1 / TsaD family. Fe(2+) serves as cofactor.

The protein resides in the cytoplasm. The catalysed reaction is L-threonylcarbamoyladenylate + adenosine(37) in tRNA = N(6)-L-threonylcarbamoyladenosine(37) in tRNA + AMP + H(+). In terms of biological role, required for the formation of a threonylcarbamoyl group on adenosine at position 37 (t(6)A37) in tRNAs that read codons beginning with adenine. Is involved in the transfer of the threonylcarbamoyl moiety of threonylcarbamoyl-AMP (TC-AMP) to the N6 group of A37, together with TsaE and TsaB. TsaD likely plays a direct catalytic role in this reaction. This Pelobacter propionicus (strain DSM 2379 / NBRC 103807 / OttBd1) protein is tRNA N6-adenosine threonylcarbamoyltransferase.